The primary structure comprises 212 residues: Pyridoxine/pyridoxamine 5'-phosphate oxidase (212 aa).

Residues 59 to 64, 74 to 75, K81, and Q103 each bind FMN; these read RMVLMK and YS. K64 is a binding site for substrate. Substrate is bound by residues Y121 and R125. FMN is bound by residues 138-139 and W183; that span reads QS. Residue 189-191 coordinates substrate; it reads RLH. Residue R193 coordinates FMN.

Belongs to the pyridoxamine 5'-phosphate oxidase family. Homodimer. The cofactor is FMN.

It catalyses the reaction pyridoxamine 5'-phosphate + O2 + H2O = pyridoxal 5'-phosphate + H2O2 + NH4(+). The catalysed reaction is pyridoxine 5'-phosphate + O2 = pyridoxal 5'-phosphate + H2O2. Its pathway is cofactor metabolism; pyridoxal 5'-phosphate salvage; pyridoxal 5'-phosphate from pyridoxamine 5'-phosphate: step 1/1. It participates in cofactor metabolism; pyridoxal 5'-phosphate salvage; pyridoxal 5'-phosphate from pyridoxine 5'-phosphate: step 1/1. Catalyzes the oxidation of either pyridoxine 5'-phosphate (PNP) or pyridoxamine 5'-phosphate (PMP) into pyridoxal 5'-phosphate (PLP). This chain is Pyridoxine/pyridoxamine 5'-phosphate oxidase, found in Rhodopseudomonas palustris (strain TIE-1).